The sequence spans 426 residues: Serine/threonine-protein kinase ssn3 (426 aa).

The region spanning 41–368 is the Protein kinase domain; the sequence is YHIVGFISSG…AREALEHPYF (328 aa). ATP is bound by residues 47-55 and lysine 71; that span reads ISSGTYGRV. Aspartate 173 (proton acceptor) is an active-site residue. A disordered region spans residues 390 to 426; the sequence is RVTQDDNDIRSGSLPGTKRSGLPDDSLMGRAAKRLKE.

It belongs to the protein kinase superfamily. CMGC Ser/Thr protein kinase family. CDC2/CDKX subfamily. In terms of assembly, component of the srb8-11 complex, a regulatory module of the Mediator complex. Requires Mg(2+) as cofactor.

The protein localises to the nucleus. It catalyses the reaction L-seryl-[protein] + ATP = O-phospho-L-seryl-[protein] + ADP + H(+). The enzyme catalyses L-threonyl-[protein] + ATP = O-phospho-L-threonyl-[protein] + ADP + H(+). The catalysed reaction is [DNA-directed RNA polymerase] + ATP = phospho-[DNA-directed RNA polymerase] + ADP + H(+). In terms of biological role, component of the srb8-11 complex. The srb8-11 complex is a regulatory module of the Mediator complex which is itself dependent transcription. The srb8-11 complex may be involved in the transcriptional repression of a subset of genes regulated by Mediator. It may inhibit the association of the Mediator complex with RNA polymerase II to form the holoenzyme complex. The srb8-11 complex phosphorylates the C-terminal domain (CTD) of the largest subunit of RNA polymerase II. This is Serine/threonine-protein kinase ssn3 (ssn3) from Neosartorya fischeri (strain ATCC 1020 / DSM 3700 / CBS 544.65 / FGSC A1164 / JCM 1740 / NRRL 181 / WB 181) (Aspergillus fischerianus).